The primary structure comprises 315 residues: MRVLLAPMEGVLDSLVRELLTEVNDYDLCITEFVRVVDQLLPVKVFHRICPELQNASRTPSGTLVRVQLLGQFPQWLAENAARAVELGSWGVDLNCGCPSKTVNGSGGGATLLKDPELIYQGAKAMREAVPAHLPVSVKVRLGWDSGEKKFEIADAVQQAGATELVVHGRTKEQGYRAEHIDWQAIGDIRQRLNIPVIANGEIWDWQSAQQCMAISGCDAVMIGRGALNIPNLSRVVKYNEPRMPWPEVVALLQKYTRLEKQGDTGLYHVARIKQWLSYLRKEYDEATELFQHVRVLNNSPDIARAIQAIDIEKL.

FMN contacts are provided by residues 7-9 (PME) and Gln-68. The active-site Proton donor is the Cys-98. Residues Lys-139, 200–202 (NGE), and 224–225 (GR) each bind FMN.

This sequence belongs to the Dus family. DusC subfamily. It depends on FMN as a cofactor.

The enzyme catalyses 5,6-dihydrouridine(16) in tRNA + NADP(+) = uridine(16) in tRNA + NADPH + H(+). The catalysed reaction is 5,6-dihydrouridine(16) in tRNA + NAD(+) = uridine(16) in tRNA + NADH + H(+). In terms of biological role, catalyzes the synthesis of 5,6-dihydrouridine (D), a modified base found in the D-loop of most tRNAs, via the reduction of the C5-C6 double bond in target uridines. DusC specifically modifies U16 in tRNAs. This chain is tRNA-dihydrouridine(16) synthase, found in Escherichia coli (strain K12).